We begin with the raw amino-acid sequence, 193 residues long: Putative deoxynucleotide monophosphate kinase (193 aa).

Lysine 10 serves as a coordination point for dGMP. The ATP site is built by glycine 13 and threonine 16. DGMP is bound by residues leucine 36, lysine 37, lysine 58, aspartate 122, arginine 124, glutamate 128, and serine 155.

It belongs to the dNMP kinase family.

The enzyme catalyses a 2'-deoxyribonucleoside 5'-phosphate + ATP = a 2'-deoxyribonucleoside 5'-diphosphate + ADP. The protein is Putative deoxynucleotide monophosphate kinase of Acanthamoeba polyphaga mimivirus (APMV).